A 618-amino-acid chain; its full sequence is DNA mismatch repair protein MutL (618 aa).

The disordered stretch occupies residues Ala371–Pro401. Residues Gly382–Ser392 show a composition bias toward gly residues.

This sequence belongs to the DNA mismatch repair MutL/HexB family.

Functionally, this protein is involved in the repair of mismatches in DNA. It is required for dam-dependent methyl-directed DNA mismatch repair. May act as a 'molecular matchmaker', a protein that promotes the formation of a stable complex between two or more DNA-binding proteins in an ATP-dependent manner without itself being part of a final effector complex. In Salmonella arizonae (strain ATCC BAA-731 / CDC346-86 / RSK2980), this protein is DNA mismatch repair protein MutL.